The chain runs to 109 residues: ATP-dependent Clp protease adapter protein ClpS 2 (109 aa).

Residues 1 to 24 are disordered; sequence MAGDGGRSGPSTPSTSVITKTKPR.

Belongs to the ClpS family. In terms of assembly, binds to the N-terminal domain of the chaperone ClpA.

Involved in the modulation of the specificity of the ClpAP-mediated ATP-dependent protein degradation. This Rhodopseudomonas palustris (strain ATCC BAA-98 / CGA009) protein is ATP-dependent Clp protease adapter protein ClpS 2.